The chain runs to 108 residues: Small ribosomal subunit protein eS25y (108 aa).

The interval 1 to 36 (MAPKKDKVPPPSSKPAKSGGGKQKKKKWSKGKQKEK) is disordered. Basic residues predominate over residues 22–31 (KQKKKKWSKG).

This sequence belongs to the eukaryotic ribosomal protein eS25 family.

This is Small ribosomal subunit protein eS25y (RPS25B) from Arabidopsis thaliana (Mouse-ear cress).